The primary structure comprises 466 residues: 3-isopropylmalate dehydratase large subunit (466 aa).

[4Fe-4S] cluster-binding residues include C347, C407, and C410.

It belongs to the aconitase/IPM isomerase family. LeuC type 1 subfamily. In terms of assembly, heterodimer of LeuC and LeuD. The cofactor is [4Fe-4S] cluster.

The enzyme catalyses (2R,3S)-3-isopropylmalate = (2S)-2-isopropylmalate. Its pathway is amino-acid biosynthesis; L-leucine biosynthesis; L-leucine from 3-methyl-2-oxobutanoate: step 2/4. Its function is as follows. Catalyzes the isomerization between 2-isopropylmalate and 3-isopropylmalate, via the formation of 2-isopropylmaleate. The sequence is that of 3-isopropylmalate dehydratase large subunit from Blochmanniella pennsylvanica (strain BPEN).